Here is a 216-residue protein sequence, read N- to C-terminus: Fibroblast growth factor 19 (216 aa).

The signal sequence occupies residues 1–24 (MRSGCVVVHVWILAGLWLAVAGRP). Cystine bridges form between Cys-58/Cys-70 and Cys-102/Cys-120.

This sequence belongs to the heparin-binding growth factors family. As to quaternary structure, interacts with FGFR1, FGFR2, FGFR3 and FGFR4. Affinity between fibroblast growth factors (FGFs) and their receptors is increased by KL, KLB and heparan sulfate glycosaminoglycans that function as coreceptors. Interacts with KL; this interaction is direct. Interacts with KLB; this interaction is direct. Interacts with FGFR4 in the presence of heparin, KL or KLB. Interacts with MALRD1. As to expression, expressed in fetal brain, cartilage, retina, and adult gall bladder.

Its subcellular location is the secreted. In terms of biological role, involved in the suppression of bile acid biosynthesis through down-regulation of CYP7A1 expression, following positive regulation of the JNK and ERK1/2 cascades. Stimulates glucose uptake in adipocytes. Activity requires the presence of KLB and FGFR4. This is Fibroblast growth factor 19 (FGF19) from Homo sapiens (Human).